A 189-amino-acid chain; its full sequence is Probable DNA-directed RNA polymerase subunit delta (189 aa).

The HTH HARE-type domain occupies 14–81; it reads LSMIEVAHAI…GENVWALRTW (68 aa). 2 stretches are compositionally biased toward acidic residues: residues 90 to 100 and 118 to 189; these read EVDHPEDDGDE and EGDD…EDEE. Residues 90 to 189 form a disordered region; the sequence is EVDHPEDDGD…DDLDDDEDEE (100 aa).

The protein belongs to the RpoE family. As to quaternary structure, RNAP is composed of a core of 2 alpha, a beta and a beta' subunits. The core is associated with a delta subunit and one of several sigma factors.

In terms of biological role, participates in both the initiation and recycling phases of transcription. In the presence of the delta subunit, RNAP displays an increased specificity of transcription, a decreased affinity for nucleic acids, and an increased efficiency of RNA synthesis because of enhanced recycling. This chain is Probable DNA-directed RNA polymerase subunit delta, found in Lactobacillus delbrueckii subsp. bulgaricus (strain ATCC BAA-365 / Lb-18).